A 105-amino-acid chain; its full sequence is Protein U4 (105 aa).

A helical transmembrane segment spans residues 5 to 25 (FLLFLLLLVLVINPSLVVNMV).

The protein belongs to the nanovirus U4 protein family.

The protein localises to the membrane. This chain is Protein U4 (DNA-U4), found in Faba bean necrotic yellows virus (isolate Egyptian EV1-93) (FBNYV).